The chain runs to 286 residues: CLA biosynthesis dehydrogenase/reductase (286 aa).

The NAD(+) site is built by Asp-37, Asp-63, Val-64, Asn-90, Tyr-156, and Lys-160. Tyr-156 acts as the Proton acceptor in catalysis.

Belongs to the short-chain dehydrogenases/reductases (SDR) family.

The protein resides in the cytoplasm. It carries out the reaction (10S)-hydroxy-(12Z)-octadecenoate + NAD(+) = 10-oxo-(12Z)-octadecenoate + NADH + H(+). The enzyme catalyses 10-oxo-(11E)-octadecenoate + NADH + H(+) = 10-hydroxy-(11E)-octadecenoate + NAD(+). The catalysed reaction is 10-oxooctadecanoate + NADH + H(+) = 10-hydroxyoctadecanoate + NAD(+). The protein operates within lipid metabolism; fatty acid metabolism. In terms of biological role, is involved in a saturation metabolic pathway of polyunsaturated fatty acids, that detoxifies unsaturated fatty acids and generates hydroxy fatty acids, oxo fatty acids, conjugated fatty acids such as conjugated linoleic acids (CLAs), and partially saturated trans-fatty acids as intermediates. CLA-DH catalyzes the dehydrogenation/reduction steps in the production of 10-oxo-(12Z)-octadecenoate, 10-hydroxy-(11E)-octadecenoate and 10-hydroxyoctadecanoate during linoleate metabolism. As part of the gut microbiome, this enzyme modifies host fatty acid composition and is expected to improve human health by altering lipid metabolism related to the onset of metabolic syndrome. The protein is CLA biosynthesis dehydrogenase/reductase of Lactiplantibacillus plantarum (Lactobacillus plantarum).